A 397-amino-acid polypeptide reads, in one-letter code: Chorismate synthase (397 aa).

NADP(+)-binding residues include Arg-40 and Arg-46. Residues 129–131, 257–258, Gly-302, 317–321, and Arg-343 contribute to the FMN site; these read RSS, QA, and KPISS.

This sequence belongs to the chorismate synthase family. Homotetramer. It depends on FMNH2 as a cofactor.

The catalysed reaction is 5-O-(1-carboxyvinyl)-3-phosphoshikimate = chorismate + phosphate. It functions in the pathway metabolic intermediate biosynthesis; chorismate biosynthesis; chorismate from D-erythrose 4-phosphate and phosphoenolpyruvate: step 7/7. In terms of biological role, catalyzes the anti-1,4-elimination of the C-3 phosphate and the C-6 proR hydrogen from 5-enolpyruvylshikimate-3-phosphate (EPSP) to yield chorismate, which is the branch point compound that serves as the starting substrate for the three terminal pathways of aromatic amino acid biosynthesis. This reaction introduces a second double bond into the aromatic ring system. The protein is Chorismate synthase of Pelodictyon phaeoclathratiforme (strain DSM 5477 / BU-1).